A 709-amino-acid chain; its full sequence is Polyribonucleotide nucleotidyltransferase (709 aa).

Mg(2+) is bound by residues aspartate 485 and aspartate 491. Positions 552–611 (PRIHTMKIDPKKIKDVIGKGGATIRALTEETGTSIDIDDDGTVKIAATDNNAAKRVMERI) constitute a KH domain. Residues 621–689 (NAIYKGKVTR…RQGRIRLTMK (69 aa)) enclose the S1 motif domain.

It belongs to the polyribonucleotide nucleotidyltransferase family. As to quaternary structure, component of the RNA degradosome, which is a multiprotein complex involved in RNA processing and mRNA degradation. Requires Mg(2+) as cofactor.

The protein resides in the cytoplasm. It carries out the reaction RNA(n+1) + phosphate = RNA(n) + a ribonucleoside 5'-diphosphate. Its function is as follows. Involved in mRNA degradation. Catalyzes the phosphorolysis of single-stranded polyribonucleotides processively in the 3'- to 5'-direction. The chain is Polyribonucleotide nucleotidyltransferase from Glaesserella parasuis serovar 5 (strain SH0165) (Haemophilus parasuis).